A 174-amino-acid polypeptide reads, in one-letter code: Translation initiation factor IF-3 (174 aa).

This sequence belongs to the IF-3 family. Monomer.

The protein localises to the cytoplasm. Its function is as follows. IF-3 binds to the 30S ribosomal subunit and shifts the equilibrium between 70S ribosomes and their 50S and 30S subunits in favor of the free subunits, thus enhancing the availability of 30S subunits on which protein synthesis initiation begins. The chain is Translation initiation factor IF-3 from Xanthobacter autotrophicus (strain ATCC BAA-1158 / Py2).